A 437-amino-acid chain; its full sequence is Phosphoethanolamine N-methyltransferase 2 (437 aa).

Residues 186 to 187 and tyrosine 195 each bind N-methylethanolamine phosphate; that span reads QY. S-adenosyl-L-homocysteine is bound by residues 204–205, glycine 232, aspartate 254, 281–282, and arginine 298; these read IS and DA. Residues tyrosine 329, tyrosine 343, 347–349, and lysine 415 each bind N-methylethanolamine phosphate; that span reads RAY.

It belongs to the class I-like SAM-binding methyltransferase superfamily.

The catalysed reaction is N-methylethanolamine phosphate + S-adenosyl-L-methionine = N,N-dimethylethanolamine phosphate + S-adenosyl-L-homocysteine + H(+). The enzyme catalyses N,N-dimethylethanolamine phosphate + S-adenosyl-L-methionine = phosphocholine + S-adenosyl-L-homocysteine + H(+). The protein operates within phospholipid metabolism; phosphatidylcholine biosynthesis; phosphocholine from phosphoethanolamine. Feedback inhibition by phosphatidylcholine and also by S-adenosylhomocysteine. In terms of biological role, catalyzes the last two methylation reactions in the synthesis of phosphocholine, by converting phospho-monomethylethanolamine (N-methylethanolamine phosphate) into phospho-dimethylethanolamine (N,N-dimethylethanolamine phosphate) and the latter into phosphocholine. Phosphocholine is a precursor for phosphatidylcholine, a major component in membranes and a precursor itself in the production of glycoconjugates secreted by parasitic nematodes to avoid host immune responses. This Caenorhabditis elegans protein is Phosphoethanolamine N-methyltransferase 2.